Consider the following 319-residue polypeptide: tRNA uridine(34) hydroxylase (319 aa).

The Rhodanese domain maps to Lys-127–Glu-221. Catalysis depends on Cys-181, which acts as the Cysteine persulfide intermediate.

This sequence belongs to the TrhO family.

It carries out the reaction uridine(34) in tRNA + AH2 + O2 = 5-hydroxyuridine(34) in tRNA + A + H2O. Catalyzes oxygen-dependent 5-hydroxyuridine (ho5U) modification at position 34 in tRNAs. This Bacillus mycoides (strain KBAB4) (Bacillus weihenstephanensis) protein is tRNA uridine(34) hydroxylase.